The chain runs to 401 residues: Heat shock transcription factor, Y-linked (401 aa).

The span at 1-11 shows a compositional bias: polar residues; sequence MAHVSSETQDV. The tract at residues 1–30 is disordered; that stretch reads MAHVSSETQDVSPKDELTASEASTRSPLCE. The DNA-binding element occupies 76–194; the sequence is LSLNFPRKLW…PQLLVRVKRR (119 aa).

This sequence belongs to the HSF family. In terms of tissue distribution, testis-specific. Present in Sertoli cells and spermatogenic cells (at protein level).

Its subcellular location is the nucleus. It localises to the cytoplasm. This Homo sapiens (Human) protein is Heat shock transcription factor, Y-linked (HSFY1).